The sequence spans 433 residues: Pectinesterase B (433 aa).

Residues 1-21 form the signal peptide; it reads MSLTHYSGLAAAVSMSLILTA. Cysteine 22 carries the N-palmitoyl cysteine lipid modification. Residue cysteine 22 is the site of S-diacylglycerol cysteine attachment. Topologically, residues 22–433 are periplasmic; it reads CGGQTPNSAR…EYNTQVLLHE (412 aa). Residues threonine 202 and glutamine 236 each coordinate substrate. Catalysis depends on aspartate 259, which acts as the Proton donor. The active-site Nucleophile is the aspartate 292. The substrate site is built by arginine 356 and tryptophan 358.

This sequence belongs to the pectinesterase family.

It is found in the cell outer membrane. The enzyme catalyses [(1-&gt;4)-alpha-D-galacturonosyl methyl ester](n) + n H2O = [(1-&gt;4)-alpha-D-galacturonosyl](n) + n methanol + n H(+). It participates in glycan metabolism; pectin degradation; 2-dehydro-3-deoxy-D-gluconate from pectin: step 1/5. Probably involved in the degradation of methylated oligogalacturonides present in the periplasm. More active on methylated oligogalacturides than on pectin. The chain is Pectinesterase B from Dickeya dadantii (strain 3937) (Erwinia chrysanthemi (strain 3937)).